A 587-amino-acid chain; its full sequence is Phosphatidylinositol-3-phosphatase SAC1 (587 aa).

The Cytoplasmic segment spans residues 1 to 520 (MATAAYEQLK…SPLSVPRDWK (520 aa)). The region spanning 122–451 (LNHVLNVDGF…ANACAKQYAG (330 aa)) is the SAC domain. The segment at 452–587 (TGALKTDFTR…PRLVQKEKID (136 aa)) is essential for phosphatidylinositol-4-phosphate phosphatase activity. At Lys456 the chain carries N6-acetyllysine. Residues 521-541 (FLALPIIMVVAFSMCIICLLM) traverse the membrane as a helical segment. Residues 542–548 (AGDTWTE) are Lumenal-facing. Residues 549–569 (TLAYVLFWGVASIGTFFIILY) traverse the membrane as a helical segment. At 570–587 (NGKDFVDAPRLVQKEKID) the chain is on the cytoplasmic side.

Interacts with TMEM39A. Interacts with SEC23A and SEC24A; this interaction is reduced in the absence of TMEM39A. Interacts with PLEKHA3 and VAPA and/or VAPB to form a ternary complex.

The protein localises to the endoplasmic reticulum membrane. Its subcellular location is the golgi apparatus membrane. The enzyme catalyses a 1,2-diacyl-sn-glycero-3-phospho-(1D-myo-inositol-3-phosphate) + H2O = a 1,2-diacyl-sn-glycero-3-phospho-(1D-myo-inositol) + phosphate. It carries out the reaction a 1,2-diacyl-sn-glycero-3-phospho-(1D-myo-inositol 4-phosphate) + H2O = a 1,2-diacyl-sn-glycero-3-phospho-(1D-myo-inositol) + phosphate. In terms of biological role, phosphoinositide phosphatase which catalyzes the hydrolysis of phosphatidylinositol 4-phosphate (PtdIns(4)P), phosphatidylinositol 3-phosphate (PtdIns(3)P) and has low activity towards phosphatidylinositol-3,5-bisphosphate (PtdIns(3,5)P2). Shows a very robust PtdIns(4)P phosphatase activity when it binds PtdIns(4)P in a 'cis' configuration in the cellular environment, with much less activity seen when it binds PtdIns(4)P in 'trans' configuration. PtdIns(4)P phosphatase activity (when it binds PtdIns(4)P in 'trans' configuration) is enhanced in the presence of PLEKHA3. The sequence is that of Phosphatidylinositol-3-phosphatase SAC1 (SACM1L) from Pongo abelii (Sumatran orangutan).